The following is a 562-amino-acid chain: Glutamine--tRNA ligase (562 aa).

Positions 35–45 (PEPNGYLHIGH) match the 'HIGH' region motif. Residues 36–38 (EPN) and 42–48 (HIGHAKS) contribute to the ATP site. L-glutamine-binding residues include Asp-68 and Tyr-213. ATP-binding positions include Thr-232 and 264-265 (RL). Positions 271–275 (ITSKR) match the 'KMSKS' region motif.

Belongs to the class-I aminoacyl-tRNA synthetase family. As to quaternary structure, monomer.

Its subcellular location is the cytoplasm. The catalysed reaction is tRNA(Gln) + L-glutamine + ATP = L-glutaminyl-tRNA(Gln) + AMP + diphosphate. The protein is Glutamine--tRNA ligase of Neisseria meningitidis serogroup A / serotype 4A (strain DSM 15465 / Z2491).